Consider the following 269-residue polypeptide: tRNA pseudouridine synthase A (269 aa).

The Nucleophile role is filled by Asp51. Tyr109 is a binding site for substrate.

Belongs to the tRNA pseudouridine synthase TruA family. Homodimer.

It carries out the reaction uridine(38/39/40) in tRNA = pseudouridine(38/39/40) in tRNA. Functionally, formation of pseudouridine at positions 38, 39 and 40 in the anticodon stem and loop of transfer RNAs. This is tRNA pseudouridine synthase A from Histophilus somni (strain 129Pt) (Haemophilus somnus).